A 74-amino-acid polypeptide reads, in one-letter code: uncharacterized protein (74 aa).

The protein localises to the mitochondrion. This is an uncharacterized protein from Marchantia polymorpha (Common liverwort).